The sequence spans 691 residues: Lectin-domain containing receptor kinase VI.4 (691 aa).

The first 19 residues, M1 to A19, serve as a signal peptide directing secretion. The Extracellular segment spans residues H20–V306. The interval T26 to A273 is legume-lectin like. A helical transmembrane segment spans residues I307–F327. Residues M328 to R691 lie on the Cytoplasmic side of the membrane. The Protein kinase domain maps to F363–I641. ATP contacts are provided by residues V369–V377 and K392. D491 (proton acceptor) is an active-site residue.

In the C-terminal section; belongs to the protein kinase superfamily. Ser/Thr protein kinase family. This sequence in the N-terminal section; belongs to the leguminous lectin family.

It is found in the cell membrane. It catalyses the reaction L-seryl-[protein] + ATP = O-phospho-L-seryl-[protein] + ADP + H(+). The catalysed reaction is L-threonyl-[protein] + ATP = O-phospho-L-threonyl-[protein] + ADP + H(+). Involved in negative regulation of abscisic acid response in seed germination. The sequence is that of Lectin-domain containing receptor kinase VI.4 (LECRK64) from Arabidopsis thaliana (Mouse-ear cress).